Here is a 411-residue protein sequence, read N- to C-terminus: MFHPRARTMLLLSLPALIIGVASSLVLIAAMKVASVFQQFLWQRLPTSIGIAYDSPFWIVGMLTLTGIVVGLIIRYSPGHAGPDPAIEPLISMPVSPSALPGLLLALIIGLAGGVSLGPEHPIMTINIALAAAFGSRLFPRITALDWTILASAGTIGALFGTPVAAALIFSQTLSGSNDIPMWDRLFAPLMAAAAGSLTTSLFFHPHFSLPIAHYTQMRLVDIASGAIVAAIAIAAGMVAVWCLPRLHELLHRLKNPVLILGIGGFILGILGVIGGPLTLFKGLDEMQQMAFSQTLGAGDYFTLAVVKLAALVIAAASGFRGGRIFPAVFIGAALGLMLHAHVEAVPAAITVSCAILGLVLVVTRDGWLSLFMAAVVVPDTNLLPLLCIVMLPAWLLLAGKPLLAANRHEP.

A run of 11 helical transmembrane segments spans residues Met9–Ala29, Asp54–Ile74, Ala99–Pro119, Ile149–Ile169, Leu186–Pro206, Ile223–Cys243, Val258–Leu278, Leu296–Ala316, Gly322–His342, Val343–Val363, and Leu386–Ala406.

Belongs to the chloride channel (TC 2.A.49) family.

It is found in the cell membrane. This chain is Putative ion-transport protein YfeO, found in Salmonella agona (strain SL483).